The primary structure comprises 393 residues: Protein TsgA (393 aa).

Helical transmembrane passes span 11 to 31 (WISF…GMVM), 51 to 71 (FLNA…EIVP), 78 to 98 (FGFL…SLAL), 101 to 121 (TAMF…TFLI), 140 to 160 (FFSM…AHSI), 162 to 182 (WYWV…LTFG), 206 to 226 (IGVL…LGFI), 245 to 265 (TLVS…SFIL), 273 to 293 (ILTV…TGTP), 297 to 317 (AWSI…IITL), 332 to 352 (FVLT…GPIV), and 361 to 381 (LLTA…LGFV).

Belongs to the major facilitator superfamily. TsgA family.

It localises to the cell inner membrane. In Shigella boydii serotype 18 (strain CDC 3083-94 / BS512), this protein is Protein TsgA.